The primary structure comprises 234 residues: Segregation and condensation protein A (234 aa).

This sequence belongs to the ScpA family. As to quaternary structure, component of a cohesin-like complex composed of ScpA, ScpB and the Smc homodimer, in which ScpA and ScpB bind to the head domain of Smc. The presence of the three proteins is required for the association of the complex with DNA.

It is found in the cytoplasm. Its function is as follows. Participates in chromosomal partition during cell division. May act via the formation of a condensin-like complex containing Smc and ScpB that pull DNA away from mid-cell into both cell halves. The protein is Segregation and condensation protein A of Streptococcus pyogenes serotype M12 (strain MGAS2096).